Reading from the N-terminus, the 363-residue chain is Protein-glutamate methylesterase/protein-glutamine glutaminase of group 3 operon (363 aa).

The Response regulatory domain occupies 7-124 (RVLIVDDSAS…RQALMESSGR (118 aa)). 4-aspartylphosphate is present on D58. Residues 166 to 357 (PTTERIVCIG…REIMAWQQAK (192 aa)) enclose the CheB-type methylesterase domain. Catalysis depends on residues S177, H203, and D299.

The protein belongs to the CheB family. Post-translationally, phosphorylated by CheA. Phosphorylation of the N-terminal regulatory domain activates the methylesterase activity.

It localises to the cytoplasm. It catalyses the reaction [protein]-L-glutamate 5-O-methyl ester + H2O = L-glutamyl-[protein] + methanol + H(+). The catalysed reaction is L-glutaminyl-[protein] + H2O = L-glutamyl-[protein] + NH4(+). Functionally, involved in chemotaxis. Part of a chemotaxis signal transduction system that modulates chemotaxis in response to various stimuli. Catalyzes the demethylation of specific methylglutamate residues introduced into the chemoreceptors (methyl-accepting chemotaxis proteins or MCP) by CheR. Also mediates the irreversible deamidation of specific glutamine residues to glutamic acid. The chain is Protein-glutamate methylesterase/protein-glutamine glutaminase of group 3 operon from Rhodopseudomonas palustris (strain ATCC BAA-98 / CGA009).